Here is a 329-residue protein sequence, read N- to C-terminus: Acetyl-coenzyme A carboxylase carboxyl transferase subunit alpha (329 aa).

Residues glutamine 40–glutamate 294 enclose the CoA carboxyltransferase C-terminal domain.

This sequence belongs to the AccA family. In terms of assembly, acetyl-CoA carboxylase is a heterohexamer composed of biotin carboxyl carrier protein (AccB), biotin carboxylase (AccC) and two subunits each of ACCase subunit alpha (AccA) and ACCase subunit beta (AccD).

Its subcellular location is the cytoplasm. The enzyme catalyses N(6)-carboxybiotinyl-L-lysyl-[protein] + acetyl-CoA = N(6)-biotinyl-L-lysyl-[protein] + malonyl-CoA. It participates in lipid metabolism; malonyl-CoA biosynthesis; malonyl-CoA from acetyl-CoA: step 1/1. In terms of biological role, component of the acetyl coenzyme A carboxylase (ACC) complex. First, biotin carboxylase catalyzes the carboxylation of biotin on its carrier protein (BCCP) and then the CO(2) group is transferred by the carboxyltransferase to acetyl-CoA to form malonyl-CoA. This chain is Acetyl-coenzyme A carboxylase carboxyl transferase subunit alpha, found in Prochlorococcus marinus (strain MIT 9211).